The sequence spans 349 residues: Thiamine-phosphate synthase (349 aa).

The tract at residues Met1–Gly125 is unknown. Residues Arg63–Ser85 are disordered. A thiamine-phosphate synthase region spans residues Leu126–Leu349. 4-amino-2-methyl-5-(diphosphooxymethyl)pyrimidine contacts are provided by residues Gln177–Lys181 and Asn209. 2 residues coordinate Mg(2+): Asp210 and Asp229. 4-amino-2-methyl-5-(diphosphooxymethyl)pyrimidine is bound by residues Ser248 and Lys277. Gly304 provides a ligand contact to 2-[(2R,5Z)-2-carboxy-4-methylthiazol-5(2H)-ylidene]ethyl phosphate.

The protein belongs to the thiamine-phosphate synthase family. The cofactor is Mg(2+).

The catalysed reaction is 2-[(2R,5Z)-2-carboxy-4-methylthiazol-5(2H)-ylidene]ethyl phosphate + 4-amino-2-methyl-5-(diphosphooxymethyl)pyrimidine + 2 H(+) = thiamine phosphate + CO2 + diphosphate. The enzyme catalyses 2-(2-carboxy-4-methylthiazol-5-yl)ethyl phosphate + 4-amino-2-methyl-5-(diphosphooxymethyl)pyrimidine + 2 H(+) = thiamine phosphate + CO2 + diphosphate. It carries out the reaction 4-methyl-5-(2-phosphooxyethyl)-thiazole + 4-amino-2-methyl-5-(diphosphooxymethyl)pyrimidine + H(+) = thiamine phosphate + diphosphate. It participates in cofactor biosynthesis; thiamine diphosphate biosynthesis; thiamine phosphate from 4-amino-2-methyl-5-diphosphomethylpyrimidine and 4-methyl-5-(2-phosphoethyl)-thiazole: step 1/1. Functionally, condenses 4-methyl-5-(beta-hydroxyethyl)thiazole monophosphate (THZ-P) and 2-methyl-4-amino-5-hydroxymethyl pyrimidine pyrophosphate (HMP-PP) to form thiamine monophosphate (TMP). This chain is Thiamine-phosphate synthase, found in Parasynechococcus marenigrum (strain WH8102).